The chain runs to 217 residues: Small ribosomal subunit protein uS3c (217 aa).

One can recognise a KH type-2 domain in the interval 47–119 (VRTHIKSSSN…KLHIAIEKVA (73 aa)).

Belongs to the universal ribosomal protein uS3 family. As to quaternary structure, part of the 30S ribosomal subunit.

The protein resides in the plastid. The protein localises to the chloroplast. The chain is Small ribosomal subunit protein uS3c (rps3) from Pinus koraiensis (Korean pine).